We begin with the raw amino-acid sequence, 311 residues long: Methionyl-tRNA formyltransferase (311 aa).

A (6S)-5,6,7,8-tetrahydrofolate-binding site is contributed by 109 to 112 (SLLP).

Belongs to the Fmt family.

The catalysed reaction is L-methionyl-tRNA(fMet) + (6R)-10-formyltetrahydrofolate = N-formyl-L-methionyl-tRNA(fMet) + (6S)-5,6,7,8-tetrahydrofolate + H(+). Functionally, attaches a formyl group to the free amino group of methionyl-tRNA(fMet). The formyl group appears to play a dual role in the initiator identity of N-formylmethionyl-tRNA by promoting its recognition by IF2 and preventing the misappropriation of this tRNA by the elongation apparatus. The chain is Methionyl-tRNA formyltransferase from Staphylococcus aureus (strain JH1).